Here is an 85-residue protein sequence, read N- to C-terminus: Growth factor (85 aa).

The signal sequence occupies residues 1–19 (MVPRDLVATLLCAMCIVQA). An EGF-like domain is found at 33-77 (RIKLCNDDYKNYCLNNGTCFTVALNNVSLNPFCACHINYVGSRCQ). 3 cysteine pairs are disulfide-bonded: Cys37/Cys51, Cys45/Cys65, and Cys67/Cys76. N-linked (GlcNAc...) asparagine; by host glycans are attached at residues Asn48 and Asn58.

Its subcellular location is the secreted. Stimulates the growth of some tissues. The sequence is that of Growth factor (MGF) from Oryctolagus cuniculus (Rabbit).